Reading from the N-terminus, the 152-residue chain is Transcriptional repressor NrdR (152 aa).

A zinc finger lies at 3–34 (CPFCSTEETKVIDSRLVSEGYQVRRRRECTNC). An ATP-cone domain is found at 49-139 (PKIVKTDGYR…VYLSFENINE (91 aa)).

The protein belongs to the NrdR family. Zn(2+) serves as cofactor.

In terms of biological role, negatively regulates transcription of bacterial ribonucleotide reductase nrd genes and operons by binding to NrdR-boxes. The protein is Transcriptional repressor NrdR of Actinobacillus succinogenes (strain ATCC 55618 / DSM 22257 / CCUG 43843 / 130Z).